We begin with the raw amino-acid sequence, 346 residues long: UPF0425 pyridoxal phosphate-dependent protein MK0620 (346 aa).

Lys-206 is modified (N6-(pyridoxal phosphate)lysine).

Pyridoxal 5'-phosphate serves as cofactor.

The polypeptide is UPF0425 pyridoxal phosphate-dependent protein MK0620 (Methanopyrus kandleri (strain AV19 / DSM 6324 / JCM 9639 / NBRC 100938)).